A 155-amino-acid chain; its full sequence is uncharacterized protein (155 aa).

4 consecutive transmembrane segments (helical) span residues 2–24 (TFLF…PPIF), 62–84 (AVVN…YLVL), 97–116 (VFLI…FLVV), and 131–148 (VVLL…KVFN).

The protein resides in the cell membrane. This is an uncharacterized protein from Aquifex aeolicus (strain VF5).